The primary structure comprises 447 residues: Cytochrome P450 BJ-4 (447 aa).

Cys-392 lines the heme pocket.

It belongs to the cytochrome P450 family. The cofactor is heme.

Cytochromes P450 are a group of heme-thiolate monooxygenases. They oxidize a variety of structurally unrelated compounds, including steroids, fatty acids, and xenobiotics. This Bradyrhizobium diazoefficiens (strain JCM 10833 / BCRC 13528 / IAM 13628 / NBRC 14792 / USDA 110) protein is Cytochrome P450 BJ-4 (cyp117).